Consider the following 55-residue polypeptide: Small ribosomal subunit protein uS14 (55 aa).

The Zn(2+) site is built by cysteine 20, cysteine 23, cysteine 38, and cysteine 41.

This sequence belongs to the universal ribosomal protein uS14 family. The cofactor is Zn(2+).

The protein is Small ribosomal subunit protein uS14 (rps29) of Dictyostelium discoideum (Social amoeba).